Reading from the N-terminus, the 71-residue chain is Pre-hexon-linking protein VIII (71 aa).

The protein belongs to the adenoviridae hexon-linking protein family. In terms of assembly, interacts with the peripentonal hexons as well as the hexons in the facets. Part of a complex composed of the core-capsid bridging protein, the endosome lysis protein VI and the hexon-linking protein VIII; these interactions bridge the virus core to the capsid. In terms of processing, cleaved by the viral protease during virion maturation. May cause the middle segment to be shed from the capsid.

It localises to the host nucleus. Its subcellular location is the virion. Structural component of the virion that acts as a cement protein on the capsid interior and which glue the peripentonal hexons and group-of-nine hexons together. The sequence is that of Pre-hexon-linking protein VIII from Canine adenovirus serotype 1 (strain Glaxo) (CAdV-1).